The primary structure comprises 705 residues: Elongation factor G (705 aa).

The region spanning 8-291 (EKVRNIGIMA…AVVEYLPSPI (284 aa)) is the tr-type G domain. Residues 17–24 (AHIDAGKT), 90–94 (DTPGH), and 144–147 (NKMD) each bind GTP.

Belongs to the TRAFAC class translation factor GTPase superfamily. Classic translation factor GTPase family. EF-G/EF-2 subfamily.

Its subcellular location is the cytoplasm. Catalyzes the GTP-dependent ribosomal translocation step during translation elongation. During this step, the ribosome changes from the pre-translocational (PRE) to the post-translocational (POST) state as the newly formed A-site-bound peptidyl-tRNA and P-site-bound deacylated tRNA move to the P and E sites, respectively. Catalyzes the coordinated movement of the two tRNA molecules, the mRNA and conformational changes in the ribosome. The polypeptide is Elongation factor G (Chloroherpeton thalassium (strain ATCC 35110 / GB-78)).